We begin with the raw amino-acid sequence, 89 residues long: Small ribosomal subunit protein uS19 (89 aa).

Belongs to the universal ribosomal protein uS19 family.

Functionally, protein S19 forms a complex with S13 that binds strongly to the 16S ribosomal RNA. This Brachyspira hyodysenteriae (strain ATCC 49526 / WA1) protein is Small ribosomal subunit protein uS19.